A 562-amino-acid chain; its full sequence is Serine palmitoyltransferase 2 (562 aa).

The chain crosses the membrane as a helical span at residues 67–87 (PMLVAVLTYVGYGVLTLFGYL). Lys379 is modified (N6-(pyridoxal phosphate)lysine).

It belongs to the class-II pyridoxal-phosphate-dependent aminotransferase family. In terms of assembly, component of the serine palmitoyltransferase (SPT) complex, which is composed of SPTLC1, SPTLC2 or SPTLC3 and SPTSSA or SPTSSB. The heterodimer consisting of SPTLC1 and SPTLC2/SPTLC3 forms the catalytic core of the enzyme, while SPTSSA or SPTSSB subunits determine substrate specificity. SPT also interacts with ORMDL proteins, especially ORMDL3, which negatively regulate SPT activity in the presence of ceramides. Forms dimers of heterodimers with SPTLC1. Pyridoxal 5'-phosphate serves as cofactor. In terms of tissue distribution, widely expressed.

The protein resides in the endoplasmic reticulum membrane. The enzyme catalyses L-serine + hexadecanoyl-CoA + H(+) = 3-oxosphinganine + CO2 + CoA. The catalysed reaction is octadecanoyl-CoA + L-serine + H(+) = 3-oxoeicosasphinganine + CO2 + CoA. The protein operates within lipid metabolism; sphingolipid metabolism. SPT complex catalytic activity is negatively regulated by ORMDL proteins, including ORMDL3, in the presence of ceramides. This mechanism allows to maintain ceramide levels at sufficient concentrations for the production of complex sphingolipids, but which prevents the accumulation of ceramides to levels that trigger apoptosis. Functionally, component of the serine palmitoyltransferase multisubunit enzyme (SPT) that catalyzes the initial and rate-limiting step in sphingolipid biosynthesis by condensing L-serine and activated acyl-CoA (most commonly palmitoyl-CoA) to form long-chain bases. The SPT complex is composed of SPTLC1, SPTLC2 or SPTLC3 and SPTSSA or SPTSSB. Within this complex, the heterodimer consisting of SPTLC1 and SPTLC2/SPTLC3 forms the catalytic core. The composition of the serine palmitoyltransferase (SPT) complex determines the substrate preference. The SPTLC1-SPTLC2-SPTSSA complex shows a strong preference for C16-CoA substrate, while the SPTLC1-SPTLC3-SPTSSA isozyme uses both C14-CoA and C16-CoA as substrates, with a slight preference for C14-CoA. The SPTLC1-SPTLC2-SPTSSB complex shows a strong preference for C18-CoA substrate, while the SPTLC1-SPTLC3-SPTSSB isozyme displays an ability to use a broader range of acyl-CoAs, without apparent preference. Crucial for adipogenesis. This is Serine palmitoyltransferase 2 from Homo sapiens (Human).